The primary structure comprises 425 residues: Histidine--tRNA ligase (425 aa).

The protein belongs to the class-II aminoacyl-tRNA synthetase family. Homodimer.

Its subcellular location is the cytoplasm. It carries out the reaction tRNA(His) + L-histidine + ATP = L-histidyl-tRNA(His) + AMP + diphosphate + H(+). This Shewanella sp. (strain ANA-3) protein is Histidine--tRNA ligase.